The sequence spans 429 residues: Multifunctional CCA protein (429 aa).

Glycine 27 and arginine 30 together coordinate ATP. CTP-binding residues include glycine 27 and arginine 30. Residues aspartate 40 and aspartate 42 each coordinate Mg(2+). Positions 110, 162, and 165 each coordinate ATP. The CTP site is built by arginine 110, arginine 162, and arginine 165. An HD domain is found at 251–352 (TGVHTMMVVD…VRLLERCDAL (102 aa)).

This sequence belongs to the tRNA nucleotidyltransferase/poly(A) polymerase family. Bacterial CCA-adding enzyme type 1 subfamily. As to quaternary structure, monomer. Can also form homodimers and oligomers. It depends on Mg(2+) as a cofactor. Requires Ni(2+) as cofactor.

It carries out the reaction a tRNA precursor + 2 CTP + ATP = a tRNA with a 3' CCA end + 3 diphosphate. The catalysed reaction is a tRNA with a 3' CCA end + 2 CTP + ATP = a tRNA with a 3' CCACCA end + 3 diphosphate. Its function is as follows. Catalyzes the addition and repair of the essential 3'-terminal CCA sequence in tRNAs without using a nucleic acid template. Adds these three nucleotides in the order of C, C, and A to the tRNA nucleotide-73, using CTP and ATP as substrates and producing inorganic pyrophosphate. tRNA 3'-terminal CCA addition is required both for tRNA processing and repair. Also involved in tRNA surveillance by mediating tandem CCA addition to generate a CCACCA at the 3' terminus of unstable tRNAs. While stable tRNAs receive only 3'-terminal CCA, unstable tRNAs are marked with CCACCA and rapidly degraded. The chain is Multifunctional CCA protein from Ralstonia nicotianae (strain ATCC BAA-1114 / GMI1000) (Ralstonia solanacearum).